A 392-amino-acid chain; its full sequence is Alaserpin (392 aa).

An N-terminal signal peptide occupies residues 1–16; the sequence is MKIIMCIFGLAALAMA. An N-linked (GlcNAc...) asparagine glycan is attached at N85.

The protein belongs to the serpin family. As to expression, hemolymph.

The protein resides in the secreted. It localises to the extracellular space. In terms of biological role, inhibits elastase. In Manduca sexta (Tobacco hawkmoth), this protein is Alaserpin.